A 567-amino-acid chain; its full sequence is 2-isopropylmalate synthase (567 aa).

Residues 28-302 (PQWCSVDLRD…NPELDFSDIN (275 aa)) form the Pyruvate carboxyltransferase domain. Asp-37, His-241, His-243, and Asn-277 together coordinate Mg(2+). The regulatory domain stretch occupies residues 435–567 (IRTPLQLNYH…DMDTQEEDIA (133 aa)).

Belongs to the alpha-IPM synthase/homocitrate synthase family. LeuA type 2 subfamily. Homodimer. It depends on Mg(2+) as a cofactor.

The protein localises to the cytoplasm. It carries out the reaction 3-methyl-2-oxobutanoate + acetyl-CoA + H2O = (2S)-2-isopropylmalate + CoA + H(+). It participates in amino-acid biosynthesis; L-leucine biosynthesis; L-leucine from 3-methyl-2-oxobutanoate: step 1/4. Catalyzes the condensation of the acetyl group of acetyl-CoA with 3-methyl-2-oxobutanoate (2-ketoisovalerate) to form 3-carboxy-3-hydroxy-4-methylpentanoate (2-isopropylmalate). The chain is 2-isopropylmalate synthase from Acetoanaerobium sticklandii (strain ATCC 12662 / DSM 519 / JCM 1433 / CCUG 9281 / NCIMB 10654 / HF) (Clostridium sticklandii).